A 265-amino-acid chain; its full sequence is Mlc titration factor A (265 aa).

Residues histidine 111, histidine 148, histidine 152, and glutamate 211 each contribute to the Zn(2+) site.

It belongs to the MtfA family. Interacts with Mlc. Requires Zn(2+) as cofactor.

The protein resides in the cytoplasm. In terms of biological role, involved in the modulation of the activity of the glucose-phosphotransferase system (glucose-PTS). Interacts with the transcriptional repressor Mlc, preventing its interaction with DNA and leading to the modulation of expression of genes regulated by Mlc, including ptsG, which encodes the PTS system glucose-specific EIICB component. Its function is as follows. Shows zinc-dependent metallopeptidase activity. In Salmonella enteritidis PT4 (strain P125109), this protein is Mlc titration factor A.